Reading from the N-terminus, the 38-residue chain is Large ribosomal subunit protein bL36 (38 aa).

Belongs to the bacterial ribosomal protein bL36 family.

The chain is Large ribosomal subunit protein bL36 from Saccharophagus degradans (strain 2-40 / ATCC 43961 / DSM 17024).